The following is a 485-amino-acid chain: Glutamate--tRNA ligase (485 aa).

The short motif at 11–21 is the 'HIGH' region element; the sequence is PSPTGYMHVGN. Zn(2+)-binding residues include C108, C110, C135, and D137. The 'KMSKS' region motif lies at 252 to 256; that stretch reads KLSKR. An ATP-binding site is contributed by K255.

Belongs to the class-I aminoacyl-tRNA synthetase family. Glutamate--tRNA ligase type 1 subfamily. Monomer. The cofactor is Zn(2+).

It localises to the cytoplasm. The catalysed reaction is tRNA(Glu) + L-glutamate + ATP = L-glutamyl-tRNA(Glu) + AMP + diphosphate. In terms of biological role, catalyzes the attachment of glutamate to tRNA(Glu) in a two-step reaction: glutamate is first activated by ATP to form Glu-AMP and then transferred to the acceptor end of tRNA(Glu). In Clostridium botulinum (strain Loch Maree / Type A3), this protein is Glutamate--tRNA ligase.